The chain runs to 281 residues: MVEQLLLPLWNNLATVDDETLPLMSTALLIARDEYPDLDANLYDTLVQSYVEYLRSEVEEISLWPLKMAAVNRYLFQKLGYSGNHDEYYDPRNSYLNQVFERRLGNPISLAVIQIEVARRLGIPLDGVSFPGHFLVRLPVDDGILVMDPFNGGRPLDAEELRERARPHLGGEAPDDRALAQILNPAPHRTILVRILRNLHSVYANTDRWDRAARCADRILKLVPNQPEALRDRGLAYLQLGHRSGALNDLKRYLQLYPSTHNVDMVRGHLVDLSNERIQTH.

TPR repeat units follow at residues Val193–Gln226 and Pro227–Thr260.

It belongs to the UPF0162 family.

This is UPF0162 protein PD_0709 from Xylella fastidiosa (strain Temecula1 / ATCC 700964).